A 137-amino-acid chain; its full sequence is Histone H2B (137 aa).

A compositionally biased stretch (basic and acidic residues) spans 1–10; that stretch reads MPPKAADKKP. The segment at 1–45 is disordered; that stretch reads MPPKAADKKPANKAPATASKAPEKKDAGKKTAASGEKKKRTKARK. N6-acetyllysine; alternate is present on residues Lys8 and Lys9. Glycyl lysine isopeptide (Lys-Gly) (interchain with G-Cter in SUMO); alternate cross-links involve residues Lys8 and Lys9. Lys13 carries the N6-acetyllysine modification. N6-acetyllysine; alternate is present on Lys24. A Glycyl lysine isopeptide (Lys-Gly) (interchain with G-Cter in SUMO); alternate cross-link involves residue Lys24. A Glycyl lysine isopeptide (Lys-Gly) (interchain with G-Cter in SUMO) cross-link involves residue Lys25. A Glycyl lysine isopeptide (Lys-Gly) (interchain with G-Cter in ubiquitin) cross-link involves residue Lys131.

It belongs to the histone H2B family. In terms of assembly, the nucleosome is a histone octamer containing two molecules each of H2A, H2B, H3 and H4 assembled in one H3-H4 heterotetramer and two H2A-H2B heterodimers. The octamer wraps approximately 147 bp of DNA. In terms of processing, monoubiquitinated to form H2BK123ub1. H2BK123ub1 gives a specific tag for epigenetic transcriptional activation and is also prerequisite for H3K4me and H3K79me formation. H2BK123ub1 also modulates the formation of double-strand breaks during meiosis and is a prerequisite for DNA-damage checkpoint activation. Post-translationally, acetylated by GCN5 to form H2BK11ac and H2BK16ac. H2BK16ac can also be formed by ESA1. Acetylation of N-terminal lysines and particularly formation of H2BK11acK16ac has a positive effect on transcription. Sumoylation to form H2BK6su or H2BK7su, and probably also H2BK16su or H2BK17su, occurs preferentially near the telomeres and represses gene transcription.

The protein localises to the nucleus. It localises to the chromosome. In terms of biological role, core component of nucleosome. Nucleosomes wrap and compact DNA into chromatin, limiting DNA accessibility to the cellular machineries which require DNA as a template. Histones thereby play a central role in transcription regulation, DNA repair, DNA replication and chromosomal stability. DNA accessibility is regulated via a complex set of post-translational modifications of histones, also called histone code, and nucleosome remodeling. The chain is Histone H2B (HTB1) from Podospora anserina (Pleurage anserina).